The primary structure comprises 659 residues: Exoribonuclease 2 (659 aa).

Positions 189–532 constitute an RNB domain; that stretch reads RRDLTALHFV…NHRLIKACLA (344 aa). The S1 motif domain maps to 577-659; that stretch reads NPEFRAEVQD…ETRSLIGNLV (83 aa).

This sequence belongs to the RNR ribonuclease family. RNase II subfamily.

The protein localises to the cytoplasm. The enzyme catalyses Exonucleolytic cleavage in the 3'- to 5'-direction to yield nucleoside 5'-phosphates.. In terms of biological role, involved in mRNA degradation. Hydrolyzes single-stranded polyribonucleotides processively in the 3' to 5' direction. This chain is Exoribonuclease 2, found in Mannheimia succiniciproducens (strain KCTC 0769BP / MBEL55E).